Reading from the N-terminus, the 1450-residue chain is Auxilin-like protein 1 (1450 aa).

Disordered regions lie at residues 117–142 (NEDKKRNRRKGGNSSDVPLCNEGKKS), 241–318 (STRD…AESS), 357–383 (DSKIENKGNTKVEGITEESRDNNSQIL), 459–480 (NSKQQEPENLAPAKPEPDTKQE), 512–541 (SQKDEKQFTEKENSTVTQMVQDEESDSQEM), 556–575 (EETPQQTESKSEMNIEEKSE), 908–946 (DRSETDSNNSRERFDQTQEQAEETMIDGSIDTDTSRSSF), 961–1046 (EQHR…ELEH), 1077–1168 (GAAT…ERKQ), 1192–1241 (AGKT…AERA), and 1254–1328 (AMEK…SDRA). The stretch at 316–344 (ESSAALKKAIEEAQIRMNIAKQMMEKKKS) forms a coiled coil. The segment covering 357–366 (DSKIENKGNT) has biased composition (basic and acidic residues). 7 stretches are compositionally biased toward basic and acidic residues: residues 512-524 (SQKDEKQFTEKEN), 564-575 (SKSEMNIEEKSE), 908-923 (DRSETDSNNSRERFDQ), 1037-1046 (RNGDKKELEH), 1117-1131 (NMKENEGEESCRSSM), 1147-1168 (ETVEEHLKKIDETREKERERKQ), and 1192-1226 (AGKTAMEKAKAVAHRREVPRKSEKGSVEVNDKLSS). 2 coiled-coil regions span residues 1142–1184 (SQNK…RERA) and 1219–1257 (EVNDKLSSAEKASMQAKLRAERAAVERAITEVRERAMEK). Residues 1270 to 1299 (SYGGSKSFSSSGERRGSSSSGTENKSSGPS) show a composition bias toward low complexity. Positions 1310 to 1328 (PIQRCKARSERHQRTSDRA) are enriched in basic and acidic residues. A coiled-coil region spans residues 1327–1355 (RAAEALAEKKLRDLKTQKEQTERNRLAEA). Residues 1377–1450 (TLQYILGAES…AWNKFGADER (74 aa)) enclose the J domain.

In Arabidopsis thaliana (Mouse-ear cress), this protein is Auxilin-like protein 1 (AUL1).